Consider the following 310-residue polypeptide: tRNA-cytidine(32) 2-sulfurtransferase (310 aa).

Positions 45–50 (SGGKDS) match the PP-loop motif motif. Cys-120, Cys-123, and Cys-211 together coordinate [4Fe-4S] cluster.

Belongs to the TtcA family. In terms of assembly, homodimer. Mg(2+) is required as a cofactor. It depends on [4Fe-4S] cluster as a cofactor.

It localises to the cytoplasm. It carries out the reaction cytidine(32) in tRNA + S-sulfanyl-L-cysteinyl-[cysteine desulfurase] + AH2 + ATP = 2-thiocytidine(32) in tRNA + L-cysteinyl-[cysteine desulfurase] + A + AMP + diphosphate + H(+). The protein operates within tRNA modification. Functionally, catalyzes the ATP-dependent 2-thiolation of cytidine in position 32 of tRNA, to form 2-thiocytidine (s(2)C32). The sulfur atoms are provided by the cysteine/cysteine desulfurase (IscS) system. The sequence is that of tRNA-cytidine(32) 2-sulfurtransferase from Shewanella oneidensis (strain ATCC 700550 / JCM 31522 / CIP 106686 / LMG 19005 / NCIMB 14063 / MR-1).